We begin with the raw amino-acid sequence, 364 residues long: tRNA N6-adenosine threonylcarbamoyltransferase (364 aa).

2 residues coordinate Fe cation: His115 and His119. Substrate-binding positions include 137–141 (LVSGG), Asp170, Gly183, and Asn288. Residue Asp316 coordinates Fe cation. The segment at 341–364 (PRSRWPLDEKSAPLIGTGRRGTKA) is disordered.

Belongs to the KAE1 / TsaD family. The cofactor is Fe(2+).

The protein resides in the cytoplasm. The enzyme catalyses L-threonylcarbamoyladenylate + adenosine(37) in tRNA = N(6)-L-threonylcarbamoyladenosine(37) in tRNA + AMP + H(+). Its function is as follows. Required for the formation of a threonylcarbamoyl group on adenosine at position 37 (t(6)A37) in tRNAs that read codons beginning with adenine. Is involved in the transfer of the threonylcarbamoyl moiety of threonylcarbamoyl-AMP (TC-AMP) to the N6 group of A37, together with TsaE and TsaB. TsaD likely plays a direct catalytic role in this reaction. The protein is tRNA N6-adenosine threonylcarbamoyltransferase of Bartonella henselae (strain ATCC 49882 / DSM 28221 / CCUG 30454 / Houston 1) (Rochalimaea henselae).